The primary structure comprises 920 residues: Isoleucine--tRNA ligase (920 aa).

Residues 58–68 carry the 'HIGH' region motif; sequence PYANGHLHLGH. Glu569 contributes to the L-isoleucyl-5'-AMP binding site. The 'KMSKS' region motif lies at 610–614; that stretch reads KMSKS. ATP is bound at residue Lys613. Cys895, Cys898, Cys910, and Cys913 together coordinate Zn(2+).

Belongs to the class-I aminoacyl-tRNA synthetase family. IleS type 1 subfamily. Monomer. Zn(2+) serves as cofactor.

It localises to the cytoplasm. The catalysed reaction is tRNA(Ile) + L-isoleucine + ATP = L-isoleucyl-tRNA(Ile) + AMP + diphosphate. Its function is as follows. Catalyzes the attachment of isoleucine to tRNA(Ile). As IleRS can inadvertently accommodate and process structurally similar amino acids such as valine, to avoid such errors it has two additional distinct tRNA(Ile)-dependent editing activities. One activity is designated as 'pretransfer' editing and involves the hydrolysis of activated Val-AMP. The other activity is designated 'posttransfer' editing and involves deacylation of mischarged Val-tRNA(Ile). The polypeptide is Isoleucine--tRNA ligase (Helicobacter pylori (strain ATCC 700392 / 26695) (Campylobacter pylori)).